Reading from the N-terminus, the 248-residue chain is Ribosomal RNA small subunit methyltransferase J (248 aa).

S-adenosyl-L-methionine-binding positions include 101-102 (RD), 117-118 (ER), 153-154 (SS), and Asp-171.

Belongs to the methyltransferase superfamily. RsmJ family.

It is found in the cytoplasm. It catalyses the reaction guanosine(1516) in 16S rRNA + S-adenosyl-L-methionine = N(2)-methylguanosine(1516) in 16S rRNA + S-adenosyl-L-homocysteine + H(+). Functionally, specifically methylates the guanosine in position 1516 of 16S rRNA. The sequence is that of Ribosomal RNA small subunit methyltransferase J from Serratia proteamaculans (strain 568).